Reading from the N-terminus, the 551-residue chain is Probable glucomannan 4-beta-mannosyltransferase 3 (551 aa).

Residues 60-80 (ACLALSAMLLADAVLMAAACF) form a helical membrane-spanning segment. The active site involves aspartate 154. Aspartate 213 and aspartate 215 together coordinate substrate. The active site involves aspartate 307. A run of 4 helical transmembrane segments spans residues 386 to 406 (VVAH…SVLI), 409 to 429 (VTVP…LHAI), 504 to 524 (ILFS…GGDY), and 525 to 545 (YFVY…GFCG).

This sequence belongs to the glycosyltransferase 2 family. Plant cellulose synthase-like A subfamily.

It is found in the golgi apparatus membrane. It carries out the reaction GDP-mannose + (glucomannan)n = GDP + (glucomannan)n+1.. Probable mannan synthase which consists of a 4-beta-mannosyltransferase activity on mannan using GDP-mannose. The beta-1,4-mannan product is the backbone for galactomannan synthesis by galactomannan galactosyltransferase. Galactomannan is a noncellulosic polysaccharides of plant cell wall. This is Probable glucomannan 4-beta-mannosyltransferase 3 from Oryza sativa subsp. japonica (Rice).